The following is a 196-amino-acid chain: DnaA initiator-associating protein DiaA (196 aa).

The SIS domain occupies 34-196 (LVQSLLNGNK…DNTLFPHQDD (163 aa)).

Belongs to the SIS family. DiaA subfamily. In terms of assembly, homotetramer; dimer of dimers.

Required for the timely initiation of chromosomal replication via direct interactions with the DnaA initiator protein. The sequence is that of DnaA initiator-associating protein DiaA from Yersinia enterocolitica serotype O:8 / biotype 1B (strain NCTC 13174 / 8081).